Here is a 134-residue protein sequence, read N- to C-terminus: S-adenosylmethionine decarboxylase proenzyme (134 aa).

The active-site Schiff-base intermediate with substrate; via pyruvic acid is the S64. S64 is subject to Pyruvic acid (Ser); by autocatalysis. The Proton acceptor; for processing activity role is filled by H69. C84 serves as the catalytic Proton donor; for catalytic activity.

The protein belongs to the prokaryotic AdoMetDC family. Type 1 subfamily. As to quaternary structure, heterotetramer of two alpha and two beta chains arranged as a dimer of alpha/beta heterodimers. Requires pyruvate as cofactor. Post-translationally, is synthesized initially as an inactive proenzyme. Formation of the active enzyme involves a self-maturation process in which the active site pyruvoyl group is generated from an internal serine residue via an autocatalytic post-translational modification. Two non-identical subunits are generated from the proenzyme in this reaction, and the pyruvate is formed at the N-terminus of the alpha chain, which is derived from the carboxyl end of the proenzyme. The post-translation cleavage follows an unusual pathway, termed non-hydrolytic serinolysis, in which the side chain hydroxyl group of the serine supplies its oxygen atom to form the C-terminus of the beta chain, while the remainder of the serine residue undergoes an oxidative deamination to produce ammonia and the pyruvoyl group blocking the N-terminus of the alpha chain.

The enzyme catalyses S-adenosyl-L-methionine + H(+) = S-adenosyl 3-(methylsulfanyl)propylamine + CO2. It participates in amine and polyamine biosynthesis; S-adenosylmethioninamine biosynthesis; S-adenosylmethioninamine from S-adenosyl-L-methionine: step 1/1. Catalyzes the decarboxylation of S-adenosylmethionine to S-adenosylmethioninamine (dcAdoMet), the propylamine donor required for the synthesis of the polyamines spermine and spermidine from the diamine putrescine. This Hydrogenobaculum sp. (strain Y04AAS1) protein is S-adenosylmethionine decarboxylase proenzyme.